A 791-amino-acid chain; its full sequence is MARKNSSLNGSESAELVVKKRVLEESELSDSEDERIEVDGLIDEEASENEAEEAEDDDSDAEFNRLLAEEENGQEEEYNTSDFSEEGDAFSITDKLSNVKLTVIPETSDEGIVRTKYSDGRPRILKSEINPVYDSDDSDAEAKNTIGNIPLSAYDEMPHIGYDINGKRIMRPAKGSALDQLLESIELPEGWTGLLDKDSGASLNLTEEELELINKLQNNQQTDESVNPYEPLIDWFTRHESVMPVTAVPEPKRRFVPSKHEAKRVMKIVKAIREGRIIPPKKLKELREKEEQDSHNYDLWGDAEEISEHVMNLRAPKLPPPTNEESYNPPEEYLLTPEEIDAWEKMEPSERERNFVPHKFAALRKVPGYSESVRERFERSLDLYLAPRVRKNKLNIDPESLIPELPSTKDLRPFPIRCSTVYVGHKGKIRTMSIDPTGLWLATGSDDGTVRVWEILTGREVYQVTILNAEENNDDHIDVVEWNPDSTTGILAVTAGENIFLLVPPIFGFEIENTGKSKIEYGFGFDTFGNVKKSNLNVNSDDEDDGAESHAVKKQVAQWNKPTERQAANDICIVITCRKSVKKLSWHRKGDYFVTVQPDSGNTSVLIHQLSKHLTQSPFKKSKGIIMDAKFHPFKPQLLVCSQRYVRIYDLSQQVLIKKLLPGARWLSTIDIHPRGDNLIASSFDKRVLWHDLDLASTPYKTLRYHEKAVRSVSFHKKLPLFCSAADDGNIHVFHATVYDDLMKNPMIVPLKKLTGHKIVNSLGVLDTIWHPREAWLFSAGADKTARLWTT.

Over residues 1–12 the composition is skewed to polar residues; sequence MARKNSSLNGSE. Disordered regions lie at residues 1 to 60 and 68 to 87; these read MARK…DDSD and AEEENGQEEEYNTSDFSEEG. 2 stretches are compositionally biased toward acidic residues: residues 25 to 60 and 69 to 87; these read ESELSDSEDERIEVDGLIDEEASENEAEEAEDDDSD and EEENGQEEEYNTSDFSEEG. Residues 254–372 form a required for interaction with NOP7 region; the sequence is RFVPSKHEAK…LRKVPGYSES (119 aa). The tract at residues 372–408 is required for interaction with YTM1; the sequence is SVRERFERSLDLYLAPRVRKNKLNIDPESLIPELPST. 7 WD repeats span residues 424-463, 472-512, 576-618, 621-659, 662-701, 705-744, and 760-791; these read GHKGKIRTMSIDPTGLWLATGSDDGTVRVWEILTGREVYQ, NNDD…FEIE, TCRK…TQSP, KSKGIIMDAKFHPFKPQLLVCSQRYVRIYDLSQQVLIKK, PGARWLSTIDIHPRGDNLIASSFDKRVLWHDLDLASTPYK, YHEKAVRSVSFHKKLPLFCSAADDGNIHVFHATVYDDLMK, and VNSLGVLDTIWHPREAWLFSAGADKTARLWTT.

It belongs to the WD repeat BOP1/ERB1 family. In terms of assembly, component of the NOP7 complex, composed of ERB1, NOP7 and YTM1. The complex is held together by ERB1, which interacts with NOP7 via its N-terminal domain and with YTM1 via a high-affinity interaction between the seven-bladed beta-propeller domains of the 2 proteins. The NOP7 complex associates with the 66S pre-ribosome.

The protein resides in the nucleus. It is found in the nucleolus. Its subcellular location is the nucleoplasm. Its function is as follows. Component of the NOP7 complex, which is required for maturation of the 25S and 5.8S ribosomal RNAs and formation of the 60S ribosome. The polypeptide is Ribosome biogenesis protein ERB1 (Kluyveromyces lactis (strain ATCC 8585 / CBS 2359 / DSM 70799 / NBRC 1267 / NRRL Y-1140 / WM37) (Yeast)).